A 475-amino-acid chain; its full sequence is Ribulose bisphosphate carboxylase large chain (475 aa).

A propeptide spanning residues 1–2 (MS) is cleaved from the precursor. Pro3 carries the N-acetylproline modification. Lys14 bears the N6,N6,N6-trimethyllysine mark. Residues Asn123 and Thr173 each contribute to the substrate site. Lys175 serves as the catalytic Proton acceptor. Residue Lys177 coordinates substrate. Residues Lys201, Asp203, and Glu204 each contribute to the Mg(2+) site. Lys201 carries the N6-carboxylysine modification. His294 acts as the Proton acceptor in catalysis. Arg295, His327, and Ser379 together coordinate substrate.

This sequence belongs to the RuBisCO large chain family. Type I subfamily. In terms of assembly, heterohexadecamer of 8 large chains and 8 small chains; disulfide-linked. The disulfide link is formed within the large subunit homodimers. Mg(2+) is required as a cofactor. The disulfide bond which can form in the large chain dimeric partners within the hexadecamer appears to be associated with oxidative stress and protein turnover.

The protein resides in the plastid. It localises to the chloroplast. It carries out the reaction 2 (2R)-3-phosphoglycerate + 2 H(+) = D-ribulose 1,5-bisphosphate + CO2 + H2O. The enzyme catalyses D-ribulose 1,5-bisphosphate + O2 = 2-phosphoglycolate + (2R)-3-phosphoglycerate + 2 H(+). Its function is as follows. RuBisCO catalyzes two reactions: the carboxylation of D-ribulose 1,5-bisphosphate, the primary event in carbon dioxide fixation, as well as the oxidative fragmentation of the pentose substrate in the photorespiration process. Both reactions occur simultaneously and in competition at the same active site. The chain is Ribulose bisphosphate carboxylase large chain from Populus tremuloides (Quaking aspen).